A 324-amino-acid polypeptide reads, in one-letter code: Cathepsin L-like proteinase (324 aa).

Residues 1-16 form the signal peptide; it reads MKLIIALAALIVVINA. 3 cysteine pairs are disulfide-bonded: Cys-131/Cys-174, Cys-165/Cys-206, and Cys-263/Cys-312. Cys-134 is a catalytic residue. Active-site residues include His-270 and Asn-290.

This sequence belongs to the peptidase C1 family. In terms of tissue distribution, expressed in larval carcasses and gut, and adult gut.

The sequence is that of Cathepsin L-like proteinase from Phaedon cochleariae (Mustard beetle).